Consider the following 711-residue polypeptide: Pentatricopeptide repeat-containing protein At5g46580, chloroplastic (711 aa).

A chloroplast-targeting transit peptide spans 1 to 43 (MATVLTTAIDVCFNPQNSDTKKHSLFLKPSLFRQSRSRKLNIS). PPR repeat units follow at residues 185–219 (ETIF…GVEL), 220–254 (DNIT…GLMP), 255–289 (DEVT…GWKP), 290–324 (DAIA…DVKP), 325–359 (NVVV…GLTP), 360–394 (NEKT…KWPM), 395–425 (DFIL…MKES), 431–465 (DNFS…GVQV), 466–500 (NVMG…GVKP), and 501–535 (DDRL…NKKL). The region spanning 614 to 696 (LDVRSLSVGA…IFVATKEDLV (83 aa)) is the Smr domain.

The protein belongs to the PPR family. P subfamily.

The protein resides in the plastid. Its subcellular location is the chloroplast. This Arabidopsis thaliana (Mouse-ear cress) protein is Pentatricopeptide repeat-containing protein At5g46580, chloroplastic.